The primary structure comprises 116 residues: Small ribosomal subunit protein uS10m (116 aa).

Belongs to the universal ribosomal protein uS10 family.

It is found in the mitochondrion. The protein is Small ribosomal subunit protein uS10m (RPS10) of Reclinomonas americana.